Here is a 142-residue protein sequence, read N- to C-terminus: Small heat shock protein IbpB (142 aa).

Residues 26–137 (AGEGQSFPPY…AAQRIAISER (112 aa)) form the sHSP domain.

It belongs to the small heat shock protein (HSP20) family. In terms of assembly, homodimer. Forms homomultimers of about 100-150 subunits at optimal growth temperatures. Conformation changes to oligomers at high temperatures or high ionic concentrations. The decrease in size of the multimers is accompanied by an increase in chaperone activity.

It is found in the cytoplasm. Associates with aggregated proteins, together with IbpA, to stabilize and protect them from irreversible denaturation and extensive proteolysis during heat shock and oxidative stress. Aggregated proteins bound to the IbpAB complex are more efficiently refolded and reactivated by the ATP-dependent chaperone systems ClpB and DnaK/DnaJ/GrpE. Its activity is ATP-independent. The polypeptide is Small heat shock protein IbpB (Shigella boydii serotype 18 (strain CDC 3083-94 / BS512)).